A 467-amino-acid chain; its full sequence is Iroquois-class homeodomain protein irx-1 (467 aa).

Positions 126 to 188 form a DNA-binding region, homeobox; TALE-type; that stretch reads DPGRPKNATR…NARRRLKKEN (63 aa). Disordered regions lie at residues 198–307, 319–342, and 410–467; these read EDDN…PHNK, SPDG…PIQH, and SLSS…LPSA. Acidic residues-rich tracts occupy residues 215–225 and 233–244; these read EDDEEIDLESI and NDGEQSNEEEDE. Basic and acidic residues predominate over residues 245–262; that stretch reads KLEHLRQGEKESFKKESE. Residues 415 to 431 are compositionally biased toward basic and acidic residues; sequence KTPERTSPKHSDRENLP. Positions 447–460 are enriched in polar residues; the sequence is RENTLSQQEGTSRI.

It belongs to the TALE/IRO homeobox family. As to expression, expressed in the neural plate in overlapping patterns with other irx members, which all share an anterior border of expression. Also expressed in the mesoderm, placodes and notochord. Broadly expressed in the tailbud rhombencephalon (hindbrain). Outside the nervous system and at tailbud stages, expressed in the developing otic vesicle, branchial arches, prospective heart region and pronephros.

The protein resides in the nucleus. Acts partially redundantly with other irx members in neural patterning. Required for formation of the posterior forebrain, midbrain, hindbrain, and to a lesser extent, spinal cord. Acts early in neural plate development to induce expression of some but not all proneural genes, and specify a neural precursor state. Also up-regulates repressors that prevent neuronal differentiation. Patterns the neuroectoderm in both the anterior/posterior and dorsal/ventral axes. Acts primarily as a transcriptional repressor during neural development, and binds to the bmp4 promoter to repress gene expression and thus mediate down-regulation of bmp4 by wnt signaling. Controls multiple processes through bmp4-repression including neural plate development, neural crest specification and Spemann organizer development. Involved in the specification of the preplacodal field at the anterior border of the neural plate. Regulates the genetic cascade of interactions that are necessary for positioning the isthmus organizer and the formation of the midbrain-hindbrain boundary. Required during at least two stages of pronephros kidney development; during neurula stages, maintains transcription of key renal genes to define the size and identity of the pronephric anlage, probably in part through regulation of bmp-signaling. Subsequently required for proper formation of the intermediate tubule segment of the pronephros. Acts principally as a transcriptional activator during pronephros development. This is Iroquois-class homeodomain protein irx-1 from Xenopus tropicalis (Western clawed frog).